We begin with the raw amino-acid sequence, 551 residues long: MFS efflux transporter aclA (551 aa).

8 helical membrane passes run 26–46 (WAVFVSLCFASFVASLDITAI), 64–84 (VWIANSYTLASAVVQPLIGQI), 93–113 (PMIILMCLFALGSGICGGATS), 125–145 (GLGAGGILLLLEVIVCDLVPL), 154–174 (IALSTCALGISLGPLVGGALV), 181–201 (WVFYINLPCAGVALVALVLCL), 220–240 (WVGNTIFIAAICAIMYALVIG), and 251–271 (VLVPLVLGAFGWVLFHIFEAS). Asparagine 286 is a glycosylation site (N-linked (GlcNAc...) asparagine). 6 helical membrane-spanning segments follow: residues 294 to 314 (VLAFLAAMLMQWVVYFLTLFF), 327 to 347 (VDVIPFTGFMIPSAIVGGAIM), 356 to 376 (LHWAGFALLSICMGVFSTWDA), 385 to 405 (ILQCLVGLGHGLLLTSVLPAI), 420 to 440 (AYAFLRSFGFVWGVEIPAVVF), and 492 to 512 (LRTVWQVGMAFALLGFALVVV).

It belongs to the major facilitator superfamily.

The protein resides in the membrane. Its function is as follows. MFS efflux transporter; part of the gene cluster that mediates the biosynthesis of aspirochlorine (or antibiotic A30641), an unusual halogenated spiro compound with distinctive antifungal properties due to selective inhibition of protein biosynthesis, and which is also active against bacteria, viruses, and murine tumor cells. In Aspergillus oryzae (strain ATCC 42149 / RIB 40) (Yellow koji mold), this protein is MFS efflux transporter aclA.